The sequence spans 421 residues: 3-alpha-mycarosylerythronolide B desosaminyl transferase (421 aa).

A signal peptide spans 1-23 (MRVVFSSMASKSHLFGLVPLAWA).

The protein belongs to the glycosyltransferase 28 family. Heterotetramer composed of EryCII and EryCIII.

The enzyme catalyses 3-O-alpha-L-mycarosylerythronolide B + dTDP-alpha-D-desosamine = erythromycin D + dTDP + H(+). It functions in the pathway antibiotic biosynthesis; erythromycin biosynthesis. In terms of biological role, catalyzes the conversion of alpha-L-mycarosylerythronolide B into erythromycin D in the erythromycin biosynthesis pathway. The protein is 3-alpha-mycarosylerythronolide B desosaminyl transferase (eryCIII) of Saccharopolyspora erythraea (strain ATCC 11635 / DSM 40517 / JCM 4748 / NBRC 13426 / NCIMB 8594 / NRRL 2338).